We begin with the raw amino-acid sequence, 259 residues long: S-methyl-5'-thioadenosine phosphorylase (259 aa).

Phosphate-binding positions include Ser9 and 50–51 (RH). Substrate is bound at residue Met175. Thr176 serves as a coordination point for phosphate. Substrate is bound at residue 199–201 (DLD).

This sequence belongs to the PNP/MTAP phosphorylase family. MTAP subfamily. As to quaternary structure, homohexamer. Dimer of a homotrimer.

The catalysed reaction is S-methyl-5'-thioadenosine + phosphate = 5-(methylsulfanyl)-alpha-D-ribose 1-phosphate + adenine. It participates in amino-acid biosynthesis; L-methionine biosynthesis via salvage pathway; S-methyl-5-thio-alpha-D-ribose 1-phosphate from S-methyl-5'-thioadenosine (phosphorylase route): step 1/1. In terms of biological role, catalyzes the reversible phosphorylation of S-methyl-5'-thioadenosine (MTA) to adenine and 5-methylthioribose-1-phosphate. Involved in the breakdown of MTA, a major by-product of polyamine biosynthesis. Responsible for the first step in the methionine salvage pathway after MTA has been generated from S-adenosylmethionine. Has broad substrate specificity with 6-aminopurine nucleosides as preferred substrates. This chain is S-methyl-5'-thioadenosine phosphorylase, found in Mycolicibacterium smegmatis (strain ATCC 700084 / mc(2)155) (Mycobacterium smegmatis).